Reading from the N-terminus, the 115-residue chain is Secreted RxLR effector protein 2 (115 aa).

Residues 1-22 form the signal peptide; that stretch reads MICRSPLIVVMLFVIAAHTVLA. A RxLR-dEER motif is present at residues 57 to 82; sequence RFLRQETTFEKKLGVNDVHAVHAEER.

This sequence belongs to the RxLR effector family.

Its subcellular location is the secreted. It localises to the host cytoplasm. The protein localises to the host nucleus. Effector that acts as a broad suppressor of cell death to interrupt plant immunity. Inhibits cell death induced by cell death-inducing proteins, including the PAMP elicitor INF1 from P.infestans. The sequence is that of Secreted RxLR effector protein 2 from Plasmopara viticola (Downy mildew of grapevine).